The following is a 696-amino-acid chain: Polyribonucleotide nucleotidyltransferase (696 aa).

Residues Asp-483 and Asp-489 each contribute to the Mg(2+) site. A KH domain is found at 550 to 609 (PRITTIYVKTDKIRDVIGSGGKNIRGITEATGVTIDIDDTGKINIASTDKAACDMAIKMI). One can recognise an S1 motif domain in the interval 619–687 (GKLYMGLVKK…KQGKIKLSRK (69 aa)).

Belongs to the polyribonucleotide nucleotidyltransferase family. It depends on Mg(2+) as a cofactor.

The protein localises to the cytoplasm. The enzyme catalyses RNA(n+1) + phosphate = RNA(n) + a ribonucleoside 5'-diphosphate. In terms of biological role, involved in mRNA degradation. Catalyzes the phosphorolysis of single-stranded polyribonucleotides processively in the 3'- to 5'-direction. This is Polyribonucleotide nucleotidyltransferase from Geotalea daltonii (strain DSM 22248 / JCM 15807 / FRC-32) (Geobacter daltonii).